Here is a 253-residue protein sequence, read N- to C-terminus: Indole-3-glycerol phosphate synthase (253 aa).

This sequence belongs to the TrpC family.

It carries out the reaction 1-(2-carboxyphenylamino)-1-deoxy-D-ribulose 5-phosphate + H(+) = (1S,2R)-1-C-(indol-3-yl)glycerol 3-phosphate + CO2 + H2O. The protein operates within amino-acid biosynthesis; L-tryptophan biosynthesis; L-tryptophan from chorismate: step 4/5. The polypeptide is Indole-3-glycerol phosphate synthase (Bacillus cereus (strain B4264)).